Consider the following 81-residue polypeptide: Photosystem I iron-sulfur center (81 aa).

4Fe-4S ferredoxin-type domains lie at 2–31 (SHSV…MVPW) and 39–68 (IASA…VRVY). Cys-11, Cys-14, Cys-17, Cys-21, Cys-48, Cys-51, Cys-54, and Cys-58 together coordinate [4Fe-4S] cluster.

In terms of assembly, the eukaryotic PSI reaction center is composed of at least 11 subunits. The cofactor is [4Fe-4S] cluster.

It is found in the plastid. The protein localises to the chloroplast thylakoid membrane. The catalysed reaction is reduced [plastocyanin] + hnu + oxidized [2Fe-2S]-[ferredoxin] = oxidized [plastocyanin] + reduced [2Fe-2S]-[ferredoxin]. Apoprotein for the two 4Fe-4S centers FA and FB of photosystem I (PSI); essential for photochemical activity. FB is the terminal electron acceptor of PSI, donating electrons to ferredoxin. The C-terminus interacts with PsaA/B/D and helps assemble the protein into the PSI complex. Required for binding of PsaD and PsaE to PSI. PSI is a plastocyanin/cytochrome c6-ferredoxin oxidoreductase, converting photonic excitation into a charge separation, which transfers an electron from the donor P700 chlorophyll pair to the spectroscopically characterized acceptors A0, A1, FX, FA and FB in turn. This is Photosystem I iron-sulfur center from Emiliania huxleyi (Coccolithophore).